Reading from the N-terminus, the 229-residue chain is Leucyl/phenylalanyl-tRNA--protein transferase (229 aa).

It belongs to the L/F-transferase family.

It localises to the cytoplasm. The catalysed reaction is N-terminal L-lysyl-[protein] + L-leucyl-tRNA(Leu) = N-terminal L-leucyl-L-lysyl-[protein] + tRNA(Leu) + H(+). It carries out the reaction N-terminal L-arginyl-[protein] + L-leucyl-tRNA(Leu) = N-terminal L-leucyl-L-arginyl-[protein] + tRNA(Leu) + H(+). It catalyses the reaction L-phenylalanyl-tRNA(Phe) + an N-terminal L-alpha-aminoacyl-[protein] = an N-terminal L-phenylalanyl-L-alpha-aminoacyl-[protein] + tRNA(Phe). Functionally, functions in the N-end rule pathway of protein degradation where it conjugates Leu, Phe and, less efficiently, Met from aminoacyl-tRNAs to the N-termini of proteins containing an N-terminal arginine or lysine. This chain is Leucyl/phenylalanyl-tRNA--protein transferase, found in Desulforapulum autotrophicum (strain ATCC 43914 / DSM 3382 / VKM B-1955 / HRM2) (Desulfobacterium autotrophicum).